Reading from the N-terminus, the 624-residue chain is (-)-beta-phellandrene synthase 3, chloroplastic (624 aa).

Residues 1–48 (MAIVSSVPLASKSCLHKSLISSIHKLKPFCRTIPTLGMSRPGKYVMPS) constitute a chloroplast transit peptide. Mg(2+) is bound by residues Asp-375, Asp-379, and Asp-527. The short motif at 375–379 (DDMYD) is the DDXXD motif element.

This sequence belongs to the terpene synthase family. Tpsd subfamily. Requires Mg(2+) as cofactor. Mn(2+) is required as a cofactor.

It is found in the plastid. Its subcellular location is the chloroplast. The catalysed reaction is (2E)-geranyl diphosphate = (-)-beta-phellandrene + diphosphate. The protein operates within terpene metabolism; oleoresin biosynthesis. Its function is as follows. Terpene synthase (TPS) involved in the biosynthesis of monoterpene natural products included in conifer oleoresin secretions and volatile emissions; these compounds contribute to biotic and abiotic stress defense against herbivores and pathogens. Catalyzes the conversion of (2E)-geranyl diphosphate (GPP) to (-)-beta-phellandrene. This chain is (-)-beta-phellandrene synthase 3, chloroplastic, found in Picea sitchensis (Sitka spruce).